The primary structure comprises 200 residues: Holliday junction branch migration complex subunit RuvA (200 aa).

The segment at 1–63 (MYAYIKGTLT…EDAQLLYGFI (63 aa)) is domain I. Residues 64–142 (NQEEKDMFLS…INDVDSSQIL (79 aa)) form a domain II region. Residues 143-149 (NTDTQDH) are flexible linker. Residues 150–200 (ANAPIIKEALLALEALGYSKRELTKVEKSLSKETFDSVDDAVKRGLQLLIA) form a domain III region.

The protein belongs to the RuvA family. In terms of assembly, homotetramer. Forms an RuvA(8)-RuvB(12)-Holliday junction (HJ) complex. HJ DNA is sandwiched between 2 RuvA tetramers; dsDNA enters through RuvA and exits via RuvB. An RuvB hexamer assembles on each DNA strand where it exits the tetramer. Each RuvB hexamer is contacted by two RuvA subunits (via domain III) on 2 adjacent RuvB subunits; this complex drives branch migration. In the full resolvosome a probable DNA-RuvA(4)-RuvB(12)-RuvC(2) complex forms which resolves the HJ.

It localises to the cytoplasm. Its function is as follows. The RuvA-RuvB-RuvC complex processes Holliday junction (HJ) DNA during genetic recombination and DNA repair, while the RuvA-RuvB complex plays an important role in the rescue of blocked DNA replication forks via replication fork reversal (RFR). RuvA specifically binds to HJ cruciform DNA, conferring on it an open structure. The RuvB hexamer acts as an ATP-dependent pump, pulling dsDNA into and through the RuvAB complex. HJ branch migration allows RuvC to scan DNA until it finds its consensus sequence, where it cleaves and resolves the cruciform DNA. The sequence is that of Holliday junction branch migration complex subunit RuvA from Staphylococcus saprophyticus subsp. saprophyticus (strain ATCC 15305 / DSM 20229 / NCIMB 8711 / NCTC 7292 / S-41).